Here is a 581-residue protein sequence, read N- to C-terminus: Probable hexosyltransferase MUCI70 (581 aa).

Topologically, residues 1 to 58 are cytoplasmic; sequence MTGLGVRSSSYGSLEKTGLNGVVLPIQITTTTRTKPSKMQKDREGIVHWICKFAGRKK. A helical; Signal-anchor for type II membrane protein transmembrane segment spans residues 59–79; sequence VGMLLLFLISAVVFLRVLYVG. Topologically, residues 80-581 are lumenal; that stretch reads KGEDSQEGQG…NLPVRLPDSA (502 aa). N-linked (GlcNAc...) asparagine glycosylation is found at Asn96, Asn102, Asn119, Asn194, Asn224, Asn285, Asn382, Asn411, and Asn488. Residues 514 to 581 form a disordered region; sequence RFARQRPPVP…NLPVRLPDSA (68 aa). Pro residues predominate over residues 520-536; the sequence is PPVPNFPPPPPSPPPPV. Positions 553-571 are enriched in basic residues; that stretch reads PPRRRGRDRRSGQRGHRKA.

It belongs to the glycosyltransferase 8 family. Expressed in siliques and seeds.

It localises to the golgi apparatus membrane. It participates in glycan metabolism; pectin biosynthesis. Functionally, probable glycosyltransferase involved in pectin and/or xylans biosynthesis in cell walls. Together with IRX14, required for xylan and pectin synthesis in seed coat epidermal (SCE) cells. Collaboratively with GAUT11, essential for the accumulation of seed mucilage, a gelatinous wall rich in unbranched rhamnogalacturonan I (RG I), and for shaping the surface morphology of seeds. The sequence is that of Probable hexosyltransferase MUCI70 from Arabidopsis thaliana (Mouse-ear cress).